Consider the following 297-residue polypeptide: Acetylglutamate kinase (297 aa).

Residues 73–74, Arg-95, and Asn-188 each bind substrate; that span reads GG.

The protein belongs to the acetylglutamate kinase family. ArgB subfamily.

It localises to the cytoplasm. It carries out the reaction N-acetyl-L-glutamate + ATP = N-acetyl-L-glutamyl 5-phosphate + ADP. It participates in amino-acid biosynthesis; L-arginine biosynthesis; N(2)-acetyl-L-ornithine from L-glutamate: step 2/4. Functionally, catalyzes the ATP-dependent phosphorylation of N-acetyl-L-glutamate. The sequence is that of Acetylglutamate kinase from Trichormus variabilis (strain ATCC 29413 / PCC 7937) (Anabaena variabilis).